Here is a 347-residue protein sequence, read N- to C-terminus: NADH-ubiquinone oxidoreductase chain 2 (347 aa).

The next 9 membrane-spanning stretches (helical) occupy residues 3 to 23, 59 to 79, 93 to 115, 150 to 170, 178 to 198, 200 to 220, 240 to 260, 274 to 294, and 326 to 346; these read PLAL…TMMS, YFMT…INLM, VASN…HFWV, NTNL…WGGL, ILAY…PFNP, LTLL…MILA, MTIM…LSGF, NSII…YFYT, and LPTL…ISML.

This sequence belongs to the complex I subunit 2 family. In terms of assembly, core subunit of respiratory chain NADH dehydrogenase (Complex I) which is composed of 45 different subunits. Interacts with TMEM242.

The protein localises to the mitochondrion inner membrane. It catalyses the reaction a ubiquinone + NADH + 5 H(+)(in) = a ubiquinol + NAD(+) + 4 H(+)(out). Core subunit of the mitochondrial membrane respiratory chain NADH dehydrogenase (Complex I) which catalyzes electron transfer from NADH through the respiratory chain, using ubiquinone as an electron acceptor. Essential for the catalytic activity and assembly of complex I. The sequence is that of NADH-ubiquinone oxidoreductase chain 2 from Elephas maximus (Indian elephant).